The primary structure comprises 515 residues: 1-pyrroline-5-carboxylate dehydrogenase (515 aa).

Active-site residues include Glu-286 and Cys-320.

It belongs to the aldehyde dehydrogenase family. RocA subfamily.

It catalyses the reaction L-glutamate 5-semialdehyde + NAD(+) + H2O = L-glutamate + NADH + 2 H(+). Its pathway is amino-acid degradation; L-proline degradation into L-glutamate; L-glutamate from L-proline: step 2/2. This is 1-pyrroline-5-carboxylate dehydrogenase from Geobacillus thermodenitrificans (strain NG80-2).